We begin with the raw amino-acid sequence, 163 residues long: Troponin C (163 aa).

Position 1 is an N-acetylserine (Ser1). 4 consecutive EF-hand domains span residues Glu14–Ser49, Ile50–Asp85, Ile90–Asp125, and Leu127–Arg162. Lys20 is modified (N6,N6-dimethyllysine; alternate). Lys20 is subject to N6-methyllysine; alternate. Residues Asp27, Asp29, Asp33, Glu38, Asp63, Asp65, Ser67, Thr69, Glu74, Asp103, Asn105, Asp107, and Glu114 each contribute to the Ca(2+) site.

This sequence belongs to the troponin C family.

Its function is as follows. Troponin is the central regulatory protein of striated muscle contraction. Tn consists of three components: Tn-I which is the inhibitor of actomyosin ATPase, Tn-T which contains the binding site for tropomyosin and Tn-C. The binding of calcium to Tn-C abolishes the inhibitory action of Tn on actin filaments. This chain is Troponin C, found in Branchiostoma lanceolatum (Common lancelet).